Reading from the N-terminus, the 161-residue chain is Allophycocyanin beta chain (161 aa).

An N4-methylasparagine modification is found at Asn71. Residue Cys81 participates in (2R,3E)-phycocyanobilin binding.

Belongs to the phycobiliprotein family. In terms of assembly, heterodimer of an alpha and a beta chain. Post-translationally, contains one covalently linked phycocyanobilin chromophore.

The protein localises to the plastid. It is found in the chloroplast thylakoid membrane. Light-harvesting photosynthetic bile pigment-protein from the phycobiliprotein complex. Allophycocyanin has a maximum absorption at approximately 650 nanometers. This Pyropia haitanensis (Red seaweed) protein is Allophycocyanin beta chain (apcB).